We begin with the raw amino-acid sequence, 586 residues long: Kinesin-like protein KIF25 (586 aa).

Residues 10–94 adopt a coiled-coil conformation; it reads SFWEQRTRQL…VIQKLNQDIQ (85 aa). The 393-residue stretch at 173–565 folds into the Kinesin motor domain; the sequence is NIRVHCRIRP…LGFGIRARQV (393 aa). 267–274 contributes to the ATP binding site; the sequence is GQTGSGKS. 2 disordered regions span residues 417-460 and 564-586; these read TADQ…AGRA and QVQR…RRPD.

Belongs to the TRAFAC class myosin-kinesin ATPase superfamily. Kinesin family. In terms of assembly, homotetramer.

It is found in the cytoplasm. Its subcellular location is the cytoskeleton. It localises to the microtubule organizing center. The protein resides in the centrosome. Its function is as follows. Minus-end microtubule-dependent motor protein. Acts as a negative regulator of centrosome separation required to prevent premature centrosome separation during interphase. Required to maintain a centered nucleus to ensure that the spindle is stably oriented at the onset of mitosis. May also act as a negative regulator of amino acid starvation-induced autophagy. The protein is Kinesin-like protein KIF25 of Macaca fascicularis (Crab-eating macaque).